Consider the following 548-residue polypeptide: Putative malate oxidoreductase [NAD] (548 aa).

Tyr-96 (proton donor) is an active-site residue. Catalysis depends on Lys-169, which acts as the Proton acceptor. Residues Glu-240, Asp-241, and Asp-264 each coordinate a divalent metal cation. Residues 297 to 300 (AGTA), Asn-410, and Asn-455 contribute to the NAD(+) site.

It belongs to the malic enzymes family. Requires Mg(2+) as cofactor. Mn(2+) serves as cofactor.

The catalysed reaction is (S)-malate + NAD(+) = pyruvate + CO2 + NADH. It catalyses the reaction oxaloacetate + H(+) = pyruvate + CO2. In Mycobacterium tuberculosis (strain CDC 1551 / Oshkosh), this protein is Putative malate oxidoreductase [NAD] (mez).